The chain runs to 629 residues: uncharacterized protein (629 aa).

Position 1 is an N-acetylmethionine (M1). The disordered stretch occupies residues 308–395 (VDPEPEPDPP…PGRRSRARNA (88 aa)). The span at 322–334 (SANEPASQPNSRS) shows a compositional bias: polar residues. The VWFA domain maps to 451-587 (LVIFVVDASG…VAEGAAAVVV (137 aa)).

The protein belongs to the Mg-chelatase subunits D/I family.

This is an uncharacterized protein from Mycobacterium tuberculosis (strain ATCC 25618 / H37Rv).